Here is a 264-residue protein sequence, read N- to C-terminus: tRNA pseudouridine synthase A (264 aa).

D51 serves as the catalytic Nucleophile. Y109 contributes to the substrate binding site.

It belongs to the tRNA pseudouridine synthase TruA family. In terms of assembly, homodimer.

It catalyses the reaction uridine(38/39/40) in tRNA = pseudouridine(38/39/40) in tRNA. Its function is as follows. Formation of pseudouridine at positions 38, 39 and 40 in the anticodon stem and loop of transfer RNAs. This is tRNA pseudouridine synthase A from Vibrio atlanticus (strain LGP32) (Vibrio splendidus (strain Mel32)).